A 340-amino-acid polypeptide reads, in one-letter code: Glycerol-3-phosphate dehydrogenase [NAD(P)+] (340 aa).

Residues Ser14, Phe15, Arg35, and Lys108 each contribute to the NADPH site. Sn-glycerol 3-phosphate contacts are provided by Lys108 and Gly136. Residue Ala140 coordinates NADPH. Lys191, Asp244, Ser254, Arg255, and Asn256 together coordinate sn-glycerol 3-phosphate. Catalysis depends on Lys191, which acts as the Proton acceptor. Arg255 lines the NADPH pocket. Residue Glu281 coordinates NADPH.

Belongs to the NAD-dependent glycerol-3-phosphate dehydrogenase family.

The protein localises to the cytoplasm. The enzyme catalyses sn-glycerol 3-phosphate + NAD(+) = dihydroxyacetone phosphate + NADH + H(+). The catalysed reaction is sn-glycerol 3-phosphate + NADP(+) = dihydroxyacetone phosphate + NADPH + H(+). The protein operates within membrane lipid metabolism; glycerophospholipid metabolism. Its function is as follows. Catalyzes the reduction of the glycolytic intermediate dihydroxyacetone phosphate (DHAP) to sn-glycerol 3-phosphate (G3P), the key precursor for phospholipid synthesis. The sequence is that of Glycerol-3-phosphate dehydrogenase [NAD(P)+] from Pseudomonas aeruginosa (strain LESB58).